The primary structure comprises 672 residues: DNA ligase (672 aa).

NAD(+)-binding positions include Asp35–Asp39, Ser84–Leu85, and Glu115. The active-site N6-AMP-lysine intermediate is Lys117. Residues Arg138, Glu178, Lys294, and Lys318 each contribute to the NAD(+) site. Cys412, Cys415, Cys430, and Cys435 together coordinate Zn(2+). The BRCT domain occupies Ala592–Ala672.

It belongs to the NAD-dependent DNA ligase family. LigA subfamily. Mg(2+) is required as a cofactor. It depends on Mn(2+) as a cofactor.

The catalysed reaction is NAD(+) + (deoxyribonucleotide)n-3'-hydroxyl + 5'-phospho-(deoxyribonucleotide)m = (deoxyribonucleotide)n+m + AMP + beta-nicotinamide D-nucleotide.. DNA ligase that catalyzes the formation of phosphodiester linkages between 5'-phosphoryl and 3'-hydroxyl groups in double-stranded DNA using NAD as a coenzyme and as the energy source for the reaction. It is essential for DNA replication and repair of damaged DNA. This is DNA ligase from Myxococcus xanthus (strain DK1622).